The primary structure comprises 35 residues: UPF0387 membrane protein YohO (35 aa).

Residues 6–26 (IGVIALFLLMAIGGIGGVMLA) traverse the membrane as a helical segment.

The protein belongs to the UPF0387 family.

It localises to the cell inner membrane. The sequence is that of UPF0387 membrane protein YohO from Salmonella paratyphi A (strain ATCC 9150 / SARB42).